Consider the following 543-residue polypeptide: uncharacterized protein (543 aa).

In terms of domain architecture, PE spans 1-93 (MSFVTAAPEM…GGAYSSAEAA (93 aa)). A disordered region spans residues 194 to 214 (GGAGGPGGPTDVPAGTGGAGG).

It belongs to the mycobacterial PE family. PGRS subfamily.

This is an uncharacterized protein from Mycobacterium tuberculosis (strain CDC 1551 / Oshkosh).